Reading from the N-terminus, the 664-residue chain is MPEEKNTFYITTPIYYPSGKAHIGHAYTTVAGDAMARYKRLKGYDVFYLTGTDEHGQKIQAKAKERGISEQEYVDEIAEGFQELWKKLEISNTDFIRTTQDRHKTSVEKIFEQLLEQGDIYLGEYEGWYSVSDEEYFTETQLEEVYKDENGKVIGGKAPSGNEVELVKEESYFFRMSKYADRLVEYYNSHPEFILPESRKNEMINNFIKPGLEDLAVSRTTFDWGIKVPGNPKHVVYVWIDALSNYITALGYNTDNDTKFQKYWPADVQIVGKEIVRFHTIYWPIMLMALDLPLPKMVFGHGWILMKDGKMSKSKGNVVDPYMLIDRYGLDALRYYLLREVPFGSDGLFTPEDFVDRVNFDLANDLGNLLNRTVAMINKYFDGEIPAYQGNVTEFDQILVDFKNNVVKEYEGSMDHMQFSVALNQLWSLISRTNKYIDETAPWALAKDEDKRTELASVMTHLAENLRIIAVLLQPFLTRTPGEIFLQLGLQEENLKKWDSIYGYGEIPAGTTVVKKGTPIFPRLDAEVEVTYIQDEMKGSAPAPAEEVAEVEALETPQIGIEDFDKIDLRVAEVKQVDKVKKADKLLCFQLDLGEGKLRQVLSGIAEFYQPEELIGKKVIVVSNLKPVKLRGLMSEGMILSGEKDGKLSVIEASSALPNGAKVK.

The short motif at 15 to 25 (YYPSGKAHIGH) is the 'HIGH' region element. The 'KMSKS' region motif lies at 310–314 (KMSKS). Lys313 is a binding site for ATP. One can recognise a tRNA-binding domain in the interval 563 to 664 (DFDKIDLRVA…SALPNGAKVK (102 aa)).

Belongs to the class-I aminoacyl-tRNA synthetase family. MetG type 2B subfamily. Homodimer.

The protein resides in the cytoplasm. It catalyses the reaction tRNA(Met) + L-methionine + ATP = L-methionyl-tRNA(Met) + AMP + diphosphate. Its function is as follows. Is required not only for elongation of protein synthesis but also for the initiation of all mRNA translation through initiator tRNA(fMet) aminoacylation. This chain is Methionine--tRNA ligase (metG), found in Listeria monocytogenes serovar 1/2a (strain ATCC BAA-679 / EGD-e).